We begin with the raw amino-acid sequence, 247 residues long: E3 SUMO-protein ligase NSE2 (247 aa).

N-acetylmethionine is present on Met1. Residues Lys90 and Lys107 each participate in a glycyl lysine isopeptide (Lys-Gly) (interchain with G-Cter in SUMO2) cross-link. At Ser116 the chain carries Phosphoserine. Residues Lys125 and Lys130 each participate in a glycyl lysine isopeptide (Lys-Gly) (interchain with G-Cter in SUMO2) cross-link. The segment at 154 to 240 (VDEDIIVTQS…LRRAIENHNK (87 aa)) adopts an SP-RING-type zinc-finger fold. The Zn(2+) site is built by Cys185, His187, Cys210, and Cys215.

The protein belongs to the NSE2 family. In terms of assembly, component of the SMC5-SMC6 complex which consists at least of SMC5, SMC6, NSMCE2, NSMCE1, NSMCE4A or EID3 and NSMCE3. In terms of processing, sumoylated, possibly via autosumoylation.

Its subcellular location is the nucleus. It localises to the chromosome. The protein resides in the telomere. The protein localises to the PML body. It participates in protein modification; protein sumoylation. Its function is as follows. E3 SUMO-protein ligase component of the SMC5-SMC6 complex, a complex involved in DNA double-strand break repair by homologous recombination. Is not be required for the stability of the complex. The complex may promote sister chromatid homologous recombination by recruiting the SMC1-SMC3 cohesin complex to double-strand breaks. The complex is required for telomere maintenance via recombination in ALT (alternative lengthening of telomeres) cell lines and mediates sumoylation of shelterin complex (telosome) components which is proposed to lead to shelterin complex disassembly in ALT-associated PML bodies (APBs). Acts as an E3 ligase mediating SUMO attachment to various proteins such as SMC6L1 and TSNAX, the shelterin complex subunits TERF1, TERF2, TINF2 and TERF2IP, RAD51AP1, and maybe the cohesin components RAD21 and STAG2. Required for recruitment of telomeres to PML nuclear bodies. SUMO protein-ligase activity is required for the prevention of DNA damage-induced apoptosis by facilitating DNA repair, and for formation of APBs in ALT cell lines. Required for sister chromatid cohesion during prometaphase and mitotic progression. The protein is E3 SUMO-protein ligase NSE2 (NSMCE2) of Homo sapiens (Human).